The chain runs to 435 residues: GTPase Obg (435 aa).

Positions 1–158 (MFLDTAKVSV…RQLELELKIL (158 aa)) constitute an Obg domain. The region spanning 159–336 (ADVGLVGFPS…LLEATAELLA (178 aa)) is the OBG-type G domain. Residues 165–172 (GFPSVGKS), 190–194 (FTTIV), 212–215 (DLPG), 282–285 (NKMD), and 317–319 (SSL) each bind GTP. Mg(2+) is bound by residues Ser-172 and Thr-192. One can recognise an OCT domain in the interval 357 to 435 (GFAAEEKAFE…IGKFEFEFVD (79 aa)).

It belongs to the TRAFAC class OBG-HflX-like GTPase superfamily. OBG GTPase family. As to quaternary structure, monomer. It depends on Mg(2+) as a cofactor.

The protein localises to the cytoplasm. In terms of biological role, an essential GTPase which binds GTP, GDP and possibly (p)ppGpp with moderate affinity, with high nucleotide exchange rates and a fairly low GTP hydrolysis rate. Plays a role in control of the cell cycle, stress response, ribosome biogenesis and in those bacteria that undergo differentiation, in morphogenesis control. The sequence is that of GTPase Obg from Streptococcus equi subsp. zooepidemicus (strain MGCS10565).